The primary structure comprises 156 residues: Small ribosomal subunit protein uS7 (156 aa).

Belongs to the universal ribosomal protein uS7 family. In terms of assembly, part of the 30S ribosomal subunit. Contacts proteins S9 and S11.

In terms of biological role, one of the primary rRNA binding proteins, it binds directly to 16S rRNA where it nucleates assembly of the head domain of the 30S subunit. Is located at the subunit interface close to the decoding center, probably blocks exit of the E-site tRNA. In Prochlorococcus marinus (strain MIT 9312), this protein is Small ribosomal subunit protein uS7.